The sequence spans 132 residues: Small ribosomal subunit protein uS8 (132 aa).

Belongs to the universal ribosomal protein uS8 family. In terms of assembly, part of the 30S ribosomal subunit. Contacts proteins S5 and S12.

One of the primary rRNA binding proteins, it binds directly to 16S rRNA central domain where it helps coordinate assembly of the platform of the 30S subunit. This is Small ribosomal subunit protein uS8 from Allorhizobium ampelinum (strain ATCC BAA-846 / DSM 112012 / S4) (Agrobacterium vitis (strain S4)).